The chain runs to 570 residues: KH homology domain-containing protein 4 (570 aa).

The tract at residues 1-29 is disordered; sequence MSFGVPHSGGSRRSKWDQAGPDADAGSAP. 2 consecutive KH domains span residues 77 to 157 and 210 to 292; these read DDLV…RIKE and VFVG…NLLQ. Over residues 391-407 the composition is skewed to pro residues; the sequence is PPTAPVPPKLTAPPNPP. 3 disordered regions span residues 391–410, 438–500, and 512–570; these read PPTA…PQKR, AGMP…EPQV, and GDSS…WMAP. The interval 427 to 497 is required for nuclear retention; the sequence is QHGPIHMTNL…ESPSAPSLLE (71 aa). The segment covering 553 to 562 has biased composition (low complexity); the sequence is TQTAPQPTQQ.

This sequence belongs to the KHDC4 family. Interacts with PRPF19.

Its subcellular location is the nucleus. It is found in the cytoplasm. Its function is as follows. RNA-binding protein involved in pre-mRNA splicing. Interacts with the PRP19C/Prp19 complex/NTC/Nineteen complex which is part of the spliceosome. Involved in regulating splice site selection. Binds preferentially RNA with A/C rich sequences and poly-C stretches. The chain is KH homology domain-containing protein 4 (khdc4) from Danio rerio (Zebrafish).